The sequence spans 274 residues: Large ribosomal subunit protein uL2 (274 aa).

Positions 223-274 (VAMNPVDHPHGGGEGRTSGGRHPVTPWGVPTKGYKTRSNKRTDKYIVRRRTK) are disordered.

It belongs to the universal ribosomal protein uL2 family. As to quaternary structure, part of the 50S ribosomal subunit. Forms a bridge to the 30S subunit in the 70S ribosome.

In terms of biological role, one of the primary rRNA binding proteins. Required for association of the 30S and 50S subunits to form the 70S ribosome, for tRNA binding and peptide bond formation. It has been suggested to have peptidyltransferase activity; this is somewhat controversial. Makes several contacts with the 16S rRNA in the 70S ribosome. This is Large ribosomal subunit protein uL2 from Shewanella amazonensis (strain ATCC BAA-1098 / SB2B).